The chain runs to 132 residues: MSMTDNVADMLTRIRNAYKSKLINVSFPSSKIKTSILDVLQKEGYIKDYIITHKNNISYTEVALKYSVNGDASICEIHRVSKPGKRVYSAIKDLKGYYNNMGIYILSTPYGVMSDREAHIKNVGGEVICKVF.

It belongs to the universal ribosomal protein uS8 family. In terms of assembly, part of the 30S ribosomal subunit. Contacts proteins S5 and S12.

Its function is as follows. One of the primary rRNA binding proteins, it binds directly to 16S rRNA central domain where it helps coordinate assembly of the platform of the 30S subunit. In Rickettsia canadensis (strain McKiel), this protein is Small ribosomal subunit protein uS8.